Reading from the N-terminus, the 420-residue chain is Serine/threonine-protein kinase PCRK2 (420 aa).

The segment at 1 to 64 (MKCFLFPLGD…SNTSMSAREN (64 aa)) is disordered. A compositionally biased stretch (polar residues) spans 22–36 (SPTSNFSDVNKSGSD). Low complexity predominate over residues 42-58 (VSGTSTVSSTGRNSNTS). Phosphothreonine is present on T70. Residues 81–366 (FSRSGMIGEG…EVLEMVTKIV (286 aa)) enclose the Protein kinase domain. Residues 87 to 95 (IGEGGFGCV) and K115 each bind ATP. Y164 carries the post-translational modification Phosphotyrosine. Residue D215 is the Proton acceptor of the active site. S219 and S249 each carry phosphoserine. Phosphothreonine is present on residues T250 and T255. The residue at position 263 (Y263) is a Phosphotyrosine. The interval 369–396 (SSPGNGGKKPQLVPLKSQETSRVEEGKN) is disordered. Over residues 387 to 396 (ETSRVEEGKN) the composition is skewed to basic and acidic residues.

It belongs to the protein kinase superfamily. Ser/Thr protein kinase family. Interacts with FLS2.

Its subcellular location is the cell membrane. The catalysed reaction is L-seryl-[protein] + ATP = O-phospho-L-seryl-[protein] + ADP + H(+). The enzyme catalyses L-threonyl-[protein] + ATP = O-phospho-L-threonyl-[protein] + ADP + H(+). Functionally, functions redundantly with PCRK1 in basal resistance against bacterial pathogens and in regulation of plant immunity. Functions together with PCRK1 downstream of the pathogen-associated molecular pattern (PAMP) receptor FLS2. Contributes to the induction of SARD1 and CBP60G, which are transcriptional activator of ICS1, an enzyme involved in salicylate (SA) biosynthesis upon pathogen attack. The chain is Serine/threonine-protein kinase PCRK2 from Arabidopsis thaliana (Mouse-ear cress).